Reading from the N-terminus, the 326-residue chain is Adenosine receptor A1 (326 aa).

Over 1-10 (MPPAISAFQA) the chain is Extracellular. A helical transmembrane segment spans residues 11-33 (AYIGIEVLIALVSVPGNVLVIWA). Topologically, residues 34–46 (VKVNQALRDATFC) are cytoplasmic. A helical membrane pass occupies residues 47 to 69 (FIVSLAVADVAVGALVIPLAILI). The Extracellular portion of the chain corresponds to 70-80 (NIGPRTYFHTC). A disulfide bridge links Cys80 with Cys169. The helical transmembrane segment at 81-102 (LMVACPVLILTQSSILALLAIA) threads the bilayer. Topologically, residues 103–123 (VDRYLRVKIPLRYKTVVTPRR) are cytoplasmic. Residues 124 to 146 (AAVAIAGCWILSFVVGLTPLFGW) form a helical membrane-spanning segment. The Extracellular segment spans residues 147–176 (NRLGEAQRAWAANGSGGEPVIKCEFEKVIS). Residue Asn159 is glycosylated (N-linked (GlcNAc...) asparagine). A helical transmembrane segment spans residues 177 to 201 (MEYMVYFNFFVWVLPPLLLMVLIYL). Topologically, residues 202 to 235 (EVFYLIRRQLGKKVSASSGDPQKYYGKELKIAKS) are cytoplasmic. The chain crosses the membrane as a helical span at residues 236 to 259 (LALILFLFALSWLPLHILNCITLF). Over 260 to 267 (CPSCRKPS) the chain is Extracellular. The chain crosses the membrane as a helical span at residues 268-292 (ILMYIAIFLTHGNSAMNPIVYAFRI). Topologically, residues 293 to 326 (QKFRVTFLKIWNDHFRCQPTPPVDEDPPEEAPHD) are cytoplasmic. Cys309 carries S-palmitoyl cysteine lipidation.

It belongs to the G-protein coupled receptor 1 family.

Its subcellular location is the cell membrane. Receptor for adenosine. The activity of this receptor is mediated by G proteins which inhibit adenylyl cyclase. This Canis lupus familiaris (Dog) protein is Adenosine receptor A1 (ADORA1).